Reading from the N-terminus, the 712-residue chain is Polyribonucleotide nucleotidyltransferase (712 aa).

Mg(2+) contacts are provided by D487 and D493. Positions 554-613 (PKIITMTINPDKIRDVIGPSGKQINKIIEETGVKIDIEQDGTVFISSINQEMNDKAKKII) constitute a KH domain. Residues 623–691 (GEIYEGKVKR…KQGRVNLSRK (69 aa)) form the S1 motif domain.

Belongs to the polyribonucleotide nucleotidyltransferase family. Mg(2+) serves as cofactor.

It is found in the cytoplasm. It carries out the reaction RNA(n+1) + phosphate = RNA(n) + a ribonucleoside 5'-diphosphate. In terms of biological role, involved in mRNA degradation. Catalyzes the phosphorolysis of single-stranded polyribonucleotides processively in the 3'- to 5'-direction. This chain is Polyribonucleotide nucleotidyltransferase, found in Bacillus anthracis.